A 101-amino-acid chain; its full sequence is MINKKENIFKILTSSYSSEKSSILSEKNNTFTFKVLKNSKKSEIKSSIEKFFNVKVKKVRTVMLKGKSKKHKNIIGKRKNWKKAYVVLKKNQKINLIKNIE.

This sequence belongs to the universal ribosomal protein uL23 family. As to quaternary structure, part of the 50S ribosomal subunit. Contacts protein L29, and trigger factor when it is bound to the ribosome.

Functionally, one of the early assembly proteins it binds 23S rRNA. One of the proteins that surrounds the polypeptide exit tunnel on the outside of the ribosome. Forms the main docking site for trigger factor binding to the ribosome. The sequence is that of Large ribosomal subunit protein uL23 from Wigglesworthia glossinidia brevipalpis.